The following is a 161-amino-acid chain: Decarboxylase (161 aa).

The EthD domain maps to 29–131; sequence QGMSEEAYRK…VGDHENFADT (103 aa).

Belongs to the tpcK family.

The enzyme catalyses atrochrysone carboxylate + H(+) = atrochrysone + CO2. The protein operates within secondary metabolite biosynthesis. In terms of biological role, decarboxylase; part of the gene cluster that mediates the biosynthesis of monodictyphenone, a prenyl xanthone derivative. The pathway begins with the synthesis of atrochrysone thioester by the polyketide synthase (PKS) mdpG. The atrochrysone carboxyl ACP thioesterase mdpF then breaks the thioester bond and releases the atrochrysone carboxylic acid from mdpG. The atrochrysone carboxylic acid is then converted to atrochrysone which is further transformed into emodin anthrone by mdpH-1 and mdpH-2. Emodin is further modified to yield monodictyphenone via several steps involving mdpB, mdpC mdpJ, mdpK and mdpL. These enzymes with xptA, xptB and xptC are also proposed to be involved in the synthesis of shamixanthone from emodin. Especially, direct reduction of emodin by the short chain dehydrogenase mdpC followed by dehydration catalyzed by the scytalone dehydratase-like protein mdpB gives loss of oxygen and formation of chrysophanol intermediate in two simple steps. This is Decarboxylase from Emericella nidulans (strain FGSC A4 / ATCC 38163 / CBS 112.46 / NRRL 194 / M139) (Aspergillus nidulans).